Here is a 178-residue protein sequence, read N- to C-terminus: uncharacterized protein (178 aa).

The signal sequence occupies residues 1-19; that stretch reads MINRKILLTSLLLIFTVLS. Residues Arg52, Glu60, and Arg94 contribute to the active site.

Belongs to the thermonuclease family.

This is an uncharacterized protein from Haemophilus influenzae (strain ATCC 51907 / DSM 11121 / KW20 / Rd).